Reading from the N-terminus, the 276-residue chain is Exosome complex component RRP43 (276 aa).

At Ala-2 the chain carries N-acetylalanine.

This sequence belongs to the RNase PH family. As to quaternary structure, component of the RNA exosome core complex (Exo-9), composed of EXOSC1, EXOSC2, EXOSC3, EXOSC4, EXOSC5, EXOSC6, EXOSC7, EXOSC8 and EXOSC9; within the complex interacts with EXOSC5 and EXOSC6. The catalytically inactive RNA exosome core complex (Exo-9) associates with the catalytic subunit EXOSC10/RRP6. Exo-9 may associate with DIS3 to form the nucleolar exosome complex, or DIS3L to form the cytoplasmic exosome complex. Exo-9 is formed by a hexameric base ring consisting of the heterodimers EXOSC4-EXOSC9, EXOSC5-EXOSC8 and EXOSC6-EXOSC7, and a cap ring consisting of EXOSC1, EXOSC2 and EXOSC3. The RNA exosome complex associates with cofactors C1D/RRP47, MPHOSPH6/MPP6 and MTREX/MTR4. Binds outer membrane protein opap from Neisseria gonorrhoeae.

Its subcellular location is the cytoplasm. It localises to the nucleus. It is found in the nucleolus. Functionally, non-catalytic component of the RNA exosome complex which has 3'-&gt;5' exoribonuclease activity and participates in a multitude of cellular RNA processing and degradation events. In the nucleus, the RNA exosome complex is involved in proper maturation of stable RNA species such as rRNA, snRNA and snoRNA, in the elimination of RNA processing by-products and non-coding 'pervasive' transcripts, such as antisense RNA species and promoter-upstream transcripts (PROMPTs), and of mRNAs with processing defects, thereby limiting or excluding their export to the cytoplasm. The RNA exosome may be involved in Ig class switch recombination (CSR) and/or Ig variable region somatic hypermutation (SHM) by targeting AICDA deamination activity to transcribed dsDNA substrates. In the cytoplasm, the RNA exosome complex is involved in general mRNA turnover and specifically degrades inherently unstable mRNAs containing AU-rich elements (AREs) within their 3' untranslated regions, and in RNA surveillance pathways, preventing translation of aberrant mRNAs. It seems to be involved in degradation of histone mRNA. The catalytic inactive RNA exosome core complex of 9 subunits (Exo-9) is proposed to play a pivotal role in the binding and presentation of RNA for ribonucleolysis, and to serve as a scaffold for the association with catalytic subunits and accessory proteins or complexes. EXOSC8 binds to ARE-containing RNAs. This is Exosome complex component RRP43 (EXOSC8) from Homo sapiens (Human).